The chain runs to 146 residues: Small ribosomal subunit protein uS9 (146 aa).

Phosphoserine is present on Ser3. An N6-acetyllysine modification is found at Lys60.

Belongs to the universal ribosomal protein uS9 family. As to quaternary structure, component of the small ribosomal subunit. Part of the small subunit (SSU) processome, composed of more than 70 proteins and the RNA chaperone small nucleolar RNA (snoRNA) U3.

Its subcellular location is the cytoplasm. The protein localises to the nucleus. The protein resides in the nucleolus. Its function is as follows. Component of the small ribosomal subunit. The ribosome is a large ribonucleoprotein complex responsible for the synthesis of proteins in the cell. Part of the small subunit (SSU) processome, first precursor of the small eukaryotic ribosomal subunit. During the assembly of the SSU processome in the nucleolus, many ribosome biogenesis factors, an RNA chaperone and ribosomal proteins associate with the nascent pre-rRNA and work in concert to generate RNA folding, modifications, rearrangements and cleavage as well as targeted degradation of pre-ribosomal RNA by the RNA exosome. The polypeptide is Small ribosomal subunit protein uS9 (RPS16) (Bos taurus (Bovine)).